The following is a 409-amino-acid chain: Arginine deiminase (409 aa).

The Amidino-cysteine intermediate role is filled by Cys399.

It belongs to the arginine deiminase family.

It is found in the cytoplasm. The catalysed reaction is L-arginine + H2O = L-citrulline + NH4(+). It participates in amino-acid degradation; L-arginine degradation via ADI pathway; carbamoyl phosphate from L-arginine: step 1/2. In Borreliella afzelii (strain PKo) (Borrelia afzelii), this protein is Arginine deiminase.